Consider the following 63-residue polypeptide: Conotoxin Vi5.1a (63 aa).

A signal peptide spans 1–22; that stretch reads MRCVPVFIILLLLIPSAPSADA. Positions 23–50 are excised as a propeptide; it reads QPKTKDDVPLASYHDNAERTLQRLWNQR. Proline amide is present on Pro-62.

This sequence belongs to the conotoxin T superfamily. Contains 2 disulfide bonds that can be either 'C1-C3, C2-C4' or 'C1-C4, C2-C3', since these disulfide connectivities have been observed for conotoxins with cysteine framework V (for examples, see AC P0DQQ7 and AC P81755). As to expression, expressed by the venom duct.

It is found in the secreted. The protein is Conotoxin Vi5.1a of Conus virgo (Virgin cone).